The sequence spans 729 residues: Kinesin-like protein KAR3 (729 aa).

Residues 1 to 48 (MESLPRTPTKGRSTQHLSTPSPKNDILAMNGHKRRNTTTPPPKHTLLK) are disordered. Positions 1-109 (MESLPRTPTK…ENVNELNRTQ (109 aa)) are globular. The segment covering 10–22 (KGRSTQHLSTPSP) has biased composition (polar residues). Residues 110 to 357 (AILFEKKATL…LEEYIKDTEL (248 aa)) are a coiled coil. 13 residues coordinate ATP: N386, R388, R392, E454, G477, S478, G479, K480, T481, F482, E554, K579, and T694. Positions 386–723 (NIRVYCRIRP…LRFASKVNST (338 aa)) constitute a Kinesin motor domain.

The protein belongs to the TRAFAC class myosin-kinesin ATPase superfamily. Kinesin family. NCD subfamily. As to quaternary structure, interacts with CIK1; the interaction is direct. Interacts with VIK1; the interaction is direct.

Its subcellular location is the cytoplasm. It localises to the cytoskeleton. The protein resides in the microtubule organizing center. The protein localises to the spindle pole body. It is found in the nucleus. Its subcellular location is the chromosome. It localises to the spindle. The catalysed reaction is ATP + H2O = ADP + phosphate + H(+). It catalyses the reaction ATP + H2O + a kinesin associated with a microtubule at position (n) = ADP + phosphate + a kinesin associated with a microtubule at position (n-1, toward the minus end).. In terms of biological role, minus end-directed microtubule (MT) motor involved in spindle midzone assembly, poleward transport of newly captured kinetochores along the lateral side of MTs, karyogamy (nuclear fusion) during mating, and with an essential function in meiosis I. Functions together with the accessory proteins CIK1 or VIK1. Drives the poleward transport of newly captured kinetochores along the lateral side of MTs, both during S-phase and during M-phase. To contribute to spindle midzone assembly during mitotic metaphase, the nuclear KAR3-CIK1 motor cross-links anti-parallel microtubules to align them on the spindle axis; as the motor travels polewards splayed microtubules are pulled into alignment. During the karyogamy (nuclear fusion) step of mating, KAR3-CIK1 cross-links antiparallel cytoplasmic microtubules emanating from the spindle pole bodies of mating partners; the motor activity of KAR3 creates the force that pulls the nuclei together by sliding cross-linked microtubules past one another. KAR3-CIK1 promotes microtubule shortening predominantly from the microtubule plus-end. Together with cytoplasmic VIK1, may act to stabilize microtubules. Requires accessory protein VIK1 for spindle pole body localization and to allow the CIN8 and KIP1 motors to generate outwardly directed spindle forces. Essential during meiosis I. The ATPase activity is stimulated by microtubule-binding. The sequence is that of Kinesin-like protein KAR3 (KAR3) from Saccharomyces cerevisiae (strain ATCC 204508 / S288c) (Baker's yeast).